The following is a 366-amino-acid chain: 3-beta-hydroxysteroid dehydrogenase (366 aa).

Tyr154 serves as the catalytic Proton donor.

Belongs to the 3-beta-HSD family.

It catalyses the reaction testosterone + NAD(+) = androst-4-ene-3,17-dione + NADH + H(+). The catalysed reaction is testosterone + NADP(+) = androst-4-ene-3,17-dione + NADPH + H(+). Its function is as follows. Catalyzes the degradation of testosterone into androstenedione. This chain is 3-beta-hydroxysteroid dehydrogenase, found in Mycolicibacterium neoaurum (Mycobacterium neoaurum).